The following is a 261-amino-acid chain: Cytochrome c oxidase subunit 3 (261 aa).

At 1 to 15 (MTHQTHAYHMVNPSP) the chain is on the mitochondrial matrix side. Residues 16-34 (WPLTGALSALLLTSGLMMW) form a helical membrane-spanning segment. Residues 35–40 (FHFNNP) are Mitochondrial intermembrane-facing. The helical transmembrane segment at 41–66 (TLLVLGLLTNLISSYQWWRDIVREGT) threads the bilayer. Residues 67–72 (YQGHHT) are Mitochondrial matrix-facing. Residues 73 to 105 (KVVQKGLRYGMVLFIISEVFFFLGFFWAFYHSS) traverse the membrane as a helical segment. Topologically, residues 106–128 (LAPTPELGGCWPPTGISPLNPLE) are mitochondrial intermembrane. A helical transmembrane segment spans residues 129–152 (VPLLNTSILLASGVSITWSHHSLM). Over 153 to 155 (EGN) the chain is Mitochondrial matrix. Residues 156–183 (RKQMIQALMITIALGLYFTALQAMEYYE) form a helical membrane-spanning segment. Topologically, residues 184 to 190 (SSFTISD) are mitochondrial intermembrane. The chain crosses the membrane as a helical span at residues 191–223 (GVYGSTFFVATGFHGLHVIIGTTFLITCLLRQL). Residues 224 to 232 (LYHFTSNHH) lie on the Mitochondrial matrix side of the membrane. The helical transmembrane segment at 233-256 (FGFEAAAWYWHFVDVVWLFLYVSI) threads the bilayer. Residues 257 to 261 (YWWGS) are Mitochondrial intermembrane-facing.

This sequence belongs to the cytochrome c oxidase subunit 3 family. Component of the cytochrome c oxidase (complex IV, CIV), a multisubunit enzyme composed of 14 subunits. The complex is composed of a catalytic core of 3 subunits MT-CO1, MT-CO2 and MT-CO3, encoded in the mitochondrial DNA, and 11 supernumerary subunits COX4I, COX5A, COX5B, COX6A, COX6B, COX6C, COX7A, COX7B, COX7C, COX8 and NDUFA4, which are encoded in the nuclear genome. The complex exists as a monomer or a dimer and forms supercomplexes (SCs) in the inner mitochondrial membrane with NADH-ubiquinone oxidoreductase (complex I, CI) and ubiquinol-cytochrome c oxidoreductase (cytochrome b-c1 complex, complex III, CIII), resulting in different assemblies (supercomplex SCI(1)III(2)IV(1) and megacomplex MCI(2)III(2)IV(2)).

It is found in the mitochondrion inner membrane. The catalysed reaction is 4 Fe(II)-[cytochrome c] + O2 + 8 H(+)(in) = 4 Fe(III)-[cytochrome c] + 2 H2O + 4 H(+)(out). Its function is as follows. Component of the cytochrome c oxidase, the last enzyme in the mitochondrial electron transport chain which drives oxidative phosphorylation. The respiratory chain contains 3 multisubunit complexes succinate dehydrogenase (complex II, CII), ubiquinol-cytochrome c oxidoreductase (cytochrome b-c1 complex, complex III, CIII) and cytochrome c oxidase (complex IV, CIV), that cooperate to transfer electrons derived from NADH and succinate to molecular oxygen, creating an electrochemical gradient over the inner membrane that drives transmembrane transport and the ATP synthase. Cytochrome c oxidase is the component of the respiratory chain that catalyzes the reduction of oxygen to water. Electrons originating from reduced cytochrome c in the intermembrane space (IMS) are transferred via the dinuclear copper A center (CU(A)) of subunit 2 and heme A of subunit 1 to the active site in subunit 1, a binuclear center (BNC) formed by heme A3 and copper B (CU(B)). The BNC reduces molecular oxygen to 2 water molecules using 4 electrons from cytochrome c in the IMS and 4 protons from the mitochondrial matrix. The protein is Cytochrome c oxidase subunit 3 (MT-CO3) of Tachyglossus aculeatus aculeatus (Southeast Australian short-beaked echidna).